The sequence spans 103 residues: Large ribosomal subunit protein bL21 (103 aa).

This sequence belongs to the bacterial ribosomal protein bL21 family. In terms of assembly, part of the 50S ribosomal subunit. Contacts protein L20.

Functionally, this protein binds to 23S rRNA in the presence of protein L20. The protein is Large ribosomal subunit protein bL21 of Polynucleobacter necessarius subsp. necessarius (strain STIR1).